Here is a 105-residue protein sequence, read N- to C-terminus: Heat shock protein HspQ (105 aa).

This sequence belongs to the HspQ family.

Its subcellular location is the cytoplasm. Its function is as follows. Involved in the degradation of certain denaturated proteins, including DnaA, during heat shock stress. This chain is Heat shock protein HspQ, found in Yersinia enterocolitica serotype O:8 / biotype 1B (strain NCTC 13174 / 8081).